Consider the following 88-residue polypeptide: Sigma-conotoxin GVIIIA (88 aa).

A signal peptide spans 1–20 (MMSKMGAMFVLLLLFTLASS). The propeptide occupies 21-46 (LQEGDVQARKTRLKSDFYRALARDDR). Pro-55 is modified (4-hydroxyproline). 6'-bromotryptophan is present on Trp-80. At Ser-87 the chain carries Serine amide.

Belongs to the conotoxin S superfamily. In terms of processing, contains 5 disulfide bonds. As to expression, expressed by the venom duct.

It is found in the secreted. Sigma-conotoxins bind and inhibit serotonin-gated ion channels. This peptide selectively and reversibly inhibits 5-hydroxytryptamine 3 receptor (HTR3A) through competitive antagonism (IC(50)=53-86.8 nM). The polypeptide is Sigma-conotoxin GVIIIA (Conus geographus (Geography cone)).